The primary structure comprises 325 residues: 4-hydroxy-3-methylbut-2-enyl diphosphate reductase (325 aa).

Cys-25 serves as a coordination point for [4Fe-4S] cluster. Residues His-54 and His-87 each contribute to the (2E)-4-hydroxy-3-methylbut-2-enyl diphosphate site. Positions 54 and 87 each coordinate dimethylallyl diphosphate. The isopentenyl diphosphate site is built by His-54 and His-87. Cys-109 contributes to the [4Fe-4S] cluster binding site. (2E)-4-hydroxy-3-methylbut-2-enyl diphosphate is bound at residue His-137. His-137 is a dimethylallyl diphosphate binding site. His-137 lines the isopentenyl diphosphate pocket. The active-site Proton donor is the Glu-139. Thr-179 lines the (2E)-4-hydroxy-3-methylbut-2-enyl diphosphate pocket. Position 209 (Cys-209) interacts with [4Fe-4S] cluster. 4 residues coordinate (2E)-4-hydroxy-3-methylbut-2-enyl diphosphate: Ser-237, Ser-238, Asn-239, and Ser-282. 4 residues coordinate dimethylallyl diphosphate: Ser-237, Ser-238, Asn-239, and Ser-282. Isopentenyl diphosphate contacts are provided by Ser-237, Ser-238, Asn-239, and Ser-282.

It belongs to the IspH family. [4Fe-4S] cluster is required as a cofactor.

It catalyses the reaction isopentenyl diphosphate + 2 oxidized [2Fe-2S]-[ferredoxin] + H2O = (2E)-4-hydroxy-3-methylbut-2-enyl diphosphate + 2 reduced [2Fe-2S]-[ferredoxin] + 2 H(+). It carries out the reaction dimethylallyl diphosphate + 2 oxidized [2Fe-2S]-[ferredoxin] + H2O = (2E)-4-hydroxy-3-methylbut-2-enyl diphosphate + 2 reduced [2Fe-2S]-[ferredoxin] + 2 H(+). It participates in isoprenoid biosynthesis; dimethylallyl diphosphate biosynthesis; dimethylallyl diphosphate from (2E)-4-hydroxy-3-methylbutenyl diphosphate: step 1/1. The protein operates within isoprenoid biosynthesis; isopentenyl diphosphate biosynthesis via DXP pathway; isopentenyl diphosphate from 1-deoxy-D-xylulose 5-phosphate: step 6/6. Its function is as follows. Catalyzes the conversion of 1-hydroxy-2-methyl-2-(E)-butenyl 4-diphosphate (HMBPP) into a mixture of isopentenyl diphosphate (IPP) and dimethylallyl diphosphate (DMAPP). Acts in the terminal step of the DOXP/MEP pathway for isoprenoid precursor biosynthesis. The chain is 4-hydroxy-3-methylbut-2-enyl diphosphate reductase from Corynebacterium glutamicum (strain ATCC 13032 / DSM 20300 / JCM 1318 / BCRC 11384 / CCUG 27702 / LMG 3730 / NBRC 12168 / NCIMB 10025 / NRRL B-2784 / 534).